The chain runs to 103 residues: Small ribosomal subunit protein uS10 (103 aa).

The protein belongs to the universal ribosomal protein uS10 family. In terms of assembly, part of the 30S ribosomal subunit.

Involved in the binding of tRNA to the ribosomes. This is Small ribosomal subunit protein uS10 from Magnetococcus marinus (strain ATCC BAA-1437 / JCM 17883 / MC-1).